The chain runs to 343 residues: MTTITITRPDDWHIHLRDGAQLKDTVRDISRYMGRAIVMPNLVPPAIDTETALTYYDRIKAQVPAGSQFEPLMVLYLTDKTSPDEIRKAKASGKIVAAKLYPAGATTNSDSGVTDLKNIYPALEAMQEVGMLFLVHGEVTDSSIDIFDRERVFIENILSKIVADFPELKIVLEHITTKDAVDFVTQASDNVAATITAHHLLYNRNHMLAGGIRPHFYCLPILKRNTHQQALLAAAASGSKKFFLGTDSAPHAKDKKEAACGCAGSYTAHAAIELYAEAFESVNALDKLEAFASFNGPDFYNLPRNADTITLVKKSWDVPATYPLGDTNVVPIRAGEAIDWQVE.

Residues His-13 and His-15 each coordinate Zn(2+). Substrate is bound by residues His-15–Arg-17 and Asn-41. Positions 99, 136, and 174 each coordinate Zn(2+). Lys-99 carries the N6-carboxylysine modification. His-136 contacts substrate. Leu-219 is a binding site for substrate. A Zn(2+)-binding site is contributed by Asp-247. Asp-247 is an active-site residue. Substrate-binding residues include His-251 and Ala-263.

It belongs to the metallo-dependent hydrolases superfamily. DHOase family. Class II DHOase subfamily. Homodimer. Zn(2+) serves as cofactor.

It catalyses the reaction (S)-dihydroorotate + H2O = N-carbamoyl-L-aspartate + H(+). It participates in pyrimidine metabolism; UMP biosynthesis via de novo pathway; (S)-dihydroorotate from bicarbonate: step 3/3. Functionally, catalyzes the reversible cyclization of carbamoyl aspartate to dihydroorotate. The sequence is that of Dihydroorotase from Shewanella baltica (strain OS223).